The sequence spans 510 residues: MKKTVILSVIDGLGLREEKQGNAFKLAKTPNFDKLFNEYPNSVIQASGDYVGLPDDQMGNSEVGHLNIGAGQIVYTGLSLINKDIKDNKFKQNAKFIAAFNAVKKNNETNTLHLMGLLSDGGVHSHEEHLFKLIEAAHENGLKNVSVHVFGDGRDVAPRSILTSIKKLEAITKKYNYAIGSIMGRFYAMDRDQIFTRNEQALEVMMGKTTNYFTNASEYIKAQYQKDISDEFFIPAINKDYLAKKLNLKDNDAVIFYNFRPDRARQLSHLLIQSNLYNYQSKNQVKLSNFTSMMKYEGLDTNIAYEEMKITNPLGNILAKNGLSQLRIAETQKYAHVTFFFDGGNDVLYENEERILIDSVKADSFADYPEMSAAGITDTLIANLGKYDVIILNYANPDMVGHTGNLKATIKALEFLDFQYGKILKAIEKTNHTLFITADHGNAEITEDENGNPATKHTTSPVMLIVTDKNLKLNSGTLANIAPTILDYLKIPKPKNMLDSLIMNNKRTSK.

Mn(2+)-binding residues include aspartate 11 and serine 61. Serine 61 serves as the catalytic Phosphoserine intermediate. Residues histidine 124, 154–155 (RD), arginine 185, arginine 191, 260–263 (RPDR), and lysine 333 contribute to the substrate site. Mn(2+) is bound by residues aspartate 398, histidine 402, aspartate 439, histidine 440, and histidine 457.

It belongs to the BPG-independent phosphoglycerate mutase family. Monomer. It depends on Mn(2+) as a cofactor.

The catalysed reaction is (2R)-2-phosphoglycerate = (2R)-3-phosphoglycerate. It participates in carbohydrate degradation; glycolysis; pyruvate from D-glyceraldehyde 3-phosphate: step 3/5. Its function is as follows. Catalyzes the interconversion of 2-phosphoglycerate and 3-phosphoglycerate. In Mycoplasma mobile (strain ATCC 43663 / 163K / NCTC 11711) (Mesomycoplasma mobile), this protein is 2,3-bisphosphoglycerate-independent phosphoglycerate mutase.